A 572-amino-acid chain; its full sequence is Chaperonin CPN60-like 2, mitochondrial (572 aa).

A mitochondrion-targeting transit peptide spans Met-1–Tyr-31.

This sequence belongs to the chaperonin (HSP60) family.

The protein resides in the mitochondrion. Implicated in mitochondrial protein import and macromolecular assembly. May facilitate the correct folding of imported proteins. May also prevent misfolding and promote the refolding and proper assembly of unfolded polypeptides generated under stress conditions in the mitochondrial matrix. The sequence is that of Chaperonin CPN60-like 2, mitochondrial from Arabidopsis thaliana (Mouse-ear cress).